The sequence spans 479 residues: PRAME family member 18 (479 aa).

Residues 15 to 38 (QSLLRDQALAISVLDELPRELFPP) form an LRR 1 repeat. One copy of the LRR 1; degenerate repeat lies at 97-124 (RWKLQVLEMRDVDENFWTIWSGARLLSC). An LRR 2; degenerate repeat occupies 179-203 (HLCCTKVVNYSMSILNFRNILETVY). An LRR 3; degenerate repeat occupies 204–230 (PDSIQVLEIWNMCWLCMIVEFSRYLSQ). The stretch at 231 to 265 (MRNLRKLFISDGCRYLLSSDSQEQLVAEFSSVLLR) is one LRR 4; degenerate repeat. LRR repeat units follow at residues 266–291 (LENL…IRCL), 292–323 (RSPL…SQLK), 324–342 (QLNL…PLRA), 348–375 (AATL…ALSR), and 376–400 (CSNL…LLRH).

It belongs to the PRAME family.

This Homo sapiens (Human) protein is PRAME family member 18.